The primary structure comprises 81 residues: Protein Vpu (81 aa).

Topologically, residues 1–7 (MQSLEIV) are extracellular. The helical transmembrane segment at 8 to 28 (AIVELVVAAIIAIVVWTIVFI) threads the bilayer. The Cytoplasmic portion of the chain corresponds to 29 to 81 (EYRKILRQRKIDRLIDRIREREEDNGNESEGDQEELSALVEMGHHAPWNVDDL). Residues 50-81 (EEDNGNESEGDQEELSALVEMGHHAPWNVDDL) form a disordered region. Acidic residues predominate over residues 53 to 63 (NGNESEGDQEE). The residue at position 57 (S57) is a Phosphoserine; by host CK2.

It belongs to the HIV-1 VPU protein family. As to quaternary structure, homopentamer. Interacts with host CD4 and BRTC; these interactions induce proteasomal degradation of CD4. Interacts with host BST2; this interaction leads to the degradation of host BST2. Interacts with host FBXW11. Interacts with host AP1M1; this interaction plays a role in the mistrafficking and subsequent degradation of host BST2. Interacts with host RANBP2; this interaction allows Vpu to down-regulate host BLM sumoylation. In terms of processing, phosphorylated by host CK2. This phosphorylation is necessary for interaction with human BTRC and degradation of CD4.

It is found in the host membrane. Its activity is regulated as follows. Ion channel activity is inhibited by hexamethylene amiloride in vitro. In terms of biological role, enhances virion budding by targeting host CD4 and Tetherin/BST2 to proteasome degradation. Degradation of CD4 prevents any unwanted premature interactions between viral Env and its host receptor CD4 in the endoplasmic reticulum. Degradation of antiretroviral protein Tetherin/BST2 is important for virion budding, as BST2 tethers new viral particles to the host cell membrane. Mechanistically, Vpu bridges either CD4 or BST2 to BTRC, a substrate recognition subunit of the Skp1/Cullin/F-box protein E3 ubiquitin ligase, induces their ubiquitination and subsequent proteasomal degradation. The alteration of the E3 ligase specificity by Vpu seems to promote the degradation of host IKBKB, leading to NF-kappa-B down-regulation and subsequent apoptosis. Acts as a viroporin that forms an oligomeric ion channel in membranes. Modulates the host DNA repair mechanisms to promote degradation of nuclear viral cDNA in cells that are already productively infected in order to suppress immune sensing and proviral hyper-integration (superinfection). Manipulates PML-NBs and modulates SUMOylation of host BLM protein thereby enhancing its DNA-end processing activity toward viral unintegrated linear DNA. Also inhibits RAD52-mediated homologous repair of viral cDNA, preventing the generation of dead-end circular forms of single copies of the long terminal repeat and permitting sustained nucleolytic attack. This chain is Protein Vpu, found in Homo sapiens (Human).